Reading from the N-terminus, the 421-residue chain is MDKLIITGGARLDGEIRISGAKNAALPILAATLLADGPVTVGNLPHLHDITTMIELFGRMGIEPVIDEKLAVEIDPRTIKTLVAPYELVKTMRASILVLGPMVARFGEAEVALPGGCAIGSRPVDLHIRGLEAMGAKIEVEGGYIKAKAPEGGLRGAHFFFDTVSVTGTENIMMAAALAKGRSVLQNAAREPEVVDLANFINAMGGNVQGAGTDTITIDGVERLHSASYRVMPDRIETGTYLVAAAVTGGRVKVKDTDPTILEAVLEKLKEAGADLTTGEDWIELNMHGKRPKAVNLRTAPYPAFPTDMQAQFISLNAIAEGTGAVIETIFENRFMHVYEMHRMGAHIQVEGNTAIVTGVPALKGAPVMATDLRASASLVLSALVAEGDTLIDRIYHIDRGYECIEEKLQMLGAKIRRVPG.

22–23 (KN) is a phosphoenolpyruvate binding site. Arginine 93 provides a ligand contact to UDP-N-acetyl-alpha-D-glucosamine. Catalysis depends on cysteine 117, which acts as the Proton donor. Cysteine 117 carries the 2-(S-cysteinyl)pyruvic acid O-phosphothioketal modification. UDP-N-acetyl-alpha-D-glucosamine-binding positions include 122-126 (RPVDL), aspartate 308, and isoleucine 330.

It belongs to the EPSP synthase family. MurA subfamily.

Its subcellular location is the cytoplasm. It catalyses the reaction phosphoenolpyruvate + UDP-N-acetyl-alpha-D-glucosamine = UDP-N-acetyl-3-O-(1-carboxyvinyl)-alpha-D-glucosamine + phosphate. Its pathway is cell wall biogenesis; peptidoglycan biosynthesis. Functionally, cell wall formation. Adds enolpyruvyl to UDP-N-acetylglucosamine. The polypeptide is UDP-N-acetylglucosamine 1-carboxyvinyltransferase (Pseudomonas putida (strain W619)).